Here is a 72-residue protein sequence, read N- to C-terminus: Translation initiation factor IF-1 (72 aa).

Positions 1–72 (MSKQDVIELE…SRGRITWRKK (72 aa)) constitute an S1-like domain.

The protein belongs to the IF-1 family. Component of the 30S ribosomal translation pre-initiation complex which assembles on the 30S ribosome in the order IF-2 and IF-3, IF-1 and N-formylmethionyl-tRNA(fMet); mRNA recruitment can occur at any time during PIC assembly.

The protein resides in the cytoplasm. One of the essential components for the initiation of protein synthesis. Stabilizes the binding of IF-2 and IF-3 on the 30S subunit to which N-formylmethionyl-tRNA(fMet) subsequently binds. Helps modulate mRNA selection, yielding the 30S pre-initiation complex (PIC). Upon addition of the 50S ribosomal subunit IF-1, IF-2 and IF-3 are released leaving the mature 70S translation initiation complex. This is Translation initiation factor IF-1 from Alkaliphilus oremlandii (strain OhILAs) (Clostridium oremlandii (strain OhILAs)).